Here is a 73-residue protein sequence, read N- to C-terminus: Kappa-scoloptoxin(03)-Ssm1c (73 aa).

The first 23 residues, 1 to 23 (MKSWMAILLVMALIIFTLDNCYS), serve as a signal peptide directing secretion. 3 disulfides stabilise this stretch: Cys-32/Cys-58, Cys-41/Cys-57, and Cys-44/Cys-67.

Belongs to the scoloptoxin family. Expressed by the venom gland.

The protein localises to the secreted. Functionally, inhibits voltage-gated potassium channels. The polypeptide is Kappa-scoloptoxin(03)-Ssm1c (Scolopendra mutilans (Chinese red-headed centipede)).